A 296-amino-acid polypeptide reads, in one-letter code: Transcription factor bHLH99 (296 aa).

In terms of domain architecture, bHLH spans 99 to 150 (NQRMNHIAVERNRRKQMNHFLSILKSMMPLSYSQPNDQASIIEGTISYLKKL).

As to quaternary structure, homodimer. As to expression, expressed constitutively in roots, stems, and flowers.

The protein localises to the nucleus. The sequence is that of Transcription factor bHLH99 (BHLH99) from Arabidopsis thaliana (Mouse-ear cress).